Reading from the N-terminus, the 146-residue chain is Large-conductance mechanosensitive channel (146 aa).

Transmembrane regions (helical) follow at residues 14–34 and 81–101; these read VLDL…VNSL and GLFL…FLLV.

The protein belongs to the MscL family. In terms of assembly, homopentamer.

It is found in the cell membrane. Channel that opens in response to stretch forces in the membrane lipid bilayer. May participate in the regulation of osmotic pressure changes within the cell. The chain is Large-conductance mechanosensitive channel from Symbiobacterium thermophilum (strain DSM 24528 / JCM 14929 / IAM 14863 / T).